The sequence spans 106 residues: Small ribosomal subunit protein bS20 (106 aa).

Residues 1-20 (MATAKPKKKNPRLASGRKRV) show a composition bias toward basic residues. The interval 1–21 (MATAKPKKKNPRLASGRKRVR) is disordered.

This sequence belongs to the bacterial ribosomal protein bS20 family.

Binds directly to 16S ribosomal RNA. The chain is Small ribosomal subunit protein bS20 from Polaromonas naphthalenivorans (strain CJ2).